A 399-amino-acid chain; its full sequence is 4-hydroxy-3-methylbut-2-enyl diphosphate reductase (399 aa).

C66 is a binding site for [4Fe-4S] cluster. A (2E)-4-hydroxy-3-methylbut-2-enyl diphosphate-binding site is contributed by H96. H96 is a dimethylallyl diphosphate binding site. Residue H96 coordinates isopentenyl diphosphate. Position 157 (C157) interacts with [4Fe-4S] cluster. Residue H185 coordinates (2E)-4-hydroxy-3-methylbut-2-enyl diphosphate. Residue H185 coordinates dimethylallyl diphosphate. H185 contacts isopentenyl diphosphate. E187 acts as the Proton donor in catalysis. T250 contacts (2E)-4-hydroxy-3-methylbut-2-enyl diphosphate. A [4Fe-4S] cluster-binding site is contributed by C288. (2E)-4-hydroxy-3-methylbut-2-enyl diphosphate contacts are provided by S317, S318, N319, and S380. Dimethylallyl diphosphate is bound by residues S317, S318, N319, and S380. Isopentenyl diphosphate contacts are provided by S317, S318, N319, and S380.

Belongs to the IspH family. The cofactor is [4Fe-4S] cluster.

The enzyme catalyses isopentenyl diphosphate + 2 oxidized [2Fe-2S]-[ferredoxin] + H2O = (2E)-4-hydroxy-3-methylbut-2-enyl diphosphate + 2 reduced [2Fe-2S]-[ferredoxin] + 2 H(+). It carries out the reaction dimethylallyl diphosphate + 2 oxidized [2Fe-2S]-[ferredoxin] + H2O = (2E)-4-hydroxy-3-methylbut-2-enyl diphosphate + 2 reduced [2Fe-2S]-[ferredoxin] + 2 H(+). Its pathway is isoprenoid biosynthesis; dimethylallyl diphosphate biosynthesis; dimethylallyl diphosphate from (2E)-4-hydroxy-3-methylbutenyl diphosphate: step 1/1. The protein operates within isoprenoid biosynthesis; isopentenyl diphosphate biosynthesis via DXP pathway; isopentenyl diphosphate from 1-deoxy-D-xylulose 5-phosphate: step 6/6. Catalyzes the conversion of 1-hydroxy-2-methyl-2-(E)-butenyl 4-diphosphate (HMBPP) into a mixture of isopentenyl diphosphate (IPP) and dimethylallyl diphosphate (DMAPP). Acts in the terminal step of the DOXP/MEP pathway for isoprenoid precursor biosynthesis. This chain is 4-hydroxy-3-methylbut-2-enyl diphosphate reductase, found in Synechococcus sp. (strain CC9902).